We begin with the raw amino-acid sequence, 132 residues long: Female-specific protein 800 (132 aa).

In terms of biological role, FS800 is likely to have some function in the production or maintenance of the schistosome egg. It may have a function unrelated to eggshell formation. This chain is Female-specific protein 800, found in Schistosoma mansoni (Blood fluke).